An 81-amino-acid chain; its full sequence is Putative defensin-like protein 188 (81 aa).

Positions 1–19 (MKNSSLLFILIVVFVISSS) are cleaved as a signal peptide. 4 disulfides stabilise this stretch: Cys31-Cys81, Cys37-Cys57, Cys43-Cys75, and Cys47-Cys77.

It belongs to the DEFL family.

The protein resides in the secreted. The chain is Putative defensin-like protein 188 (LCR41) from Arabidopsis thaliana (Mouse-ear cress).